The following is a 316-amino-acid chain: N-acetylmuramic acid 6-phosphate etherase (316 aa).

Residues 1–23 are disordered; it reads MAGFDPTLQPSDDRGHLLTEQSN. The SIS domain occupies 66–229; it reads ISKRLSSGGR…STTVMVRLGK (164 aa). The active-site Proton donor is the Glu-94. Glu-125 is a catalytic residue.

The protein belongs to the GCKR-like family. MurNAc-6-P etherase subfamily. In terms of assembly, homodimer.

It carries out the reaction N-acetyl-D-muramate 6-phosphate + H2O = N-acetyl-D-glucosamine 6-phosphate + (R)-lactate. The protein operates within amino-sugar metabolism; N-acetylmuramate degradation. Functionally, specifically catalyzes the cleavage of the D-lactyl ether substituent of MurNAc 6-phosphate, producing GlcNAc 6-phosphate and D-lactate. The sequence is that of N-acetylmuramic acid 6-phosphate etherase from Synechococcus sp. (strain CC9902).